Consider the following 620-residue polypeptide: DNA primase (620 aa).

The CHC2-type zinc finger occupies 38-62 (CPFHADQNPSMTVSVAKNIFKCFSC). A Toprim domain is found at 266 to 350 (LKLYLVEGYF…IVEVVDWNQA (85 aa)). Residues Glu-272, Asp-319, and Asp-321 each coordinate Mg(2+).

It belongs to the DnaG primase family. As to quaternary structure, monomer. Interacts with DnaB. It depends on Zn(2+) as a cofactor. Mg(2+) serves as cofactor.

It carries out the reaction ssDNA + n NTP = ssDNA/pppN(pN)n-1 hybrid + (n-1) diphosphate.. Functionally, RNA polymerase that catalyzes the synthesis of short RNA molecules used as primers for DNA polymerase during DNA replication. The sequence is that of DNA primase from Mycoplasma pneumoniae (strain ATCC 29342 / M129 / Subtype 1) (Mycoplasmoides pneumoniae).